Here is a 284-residue protein sequence, read N- to C-terminus: Bifunctional protein FolD (284 aa).

Residues 164–166 (GRS) and serine 189 contribute to the NADP(+) site.

The protein belongs to the tetrahydrofolate dehydrogenase/cyclohydrolase family. In terms of assembly, homodimer.

The enzyme catalyses (6R)-5,10-methylene-5,6,7,8-tetrahydrofolate + NADP(+) = (6R)-5,10-methenyltetrahydrofolate + NADPH. It catalyses the reaction (6R)-5,10-methenyltetrahydrofolate + H2O = (6R)-10-formyltetrahydrofolate + H(+). It functions in the pathway one-carbon metabolism; tetrahydrofolate interconversion. Catalyzes the oxidation of 5,10-methylenetetrahydrofolate to 5,10-methenyltetrahydrofolate and then the hydrolysis of 5,10-methenyltetrahydrofolate to 10-formyltetrahydrofolate. The protein is Bifunctional protein FolD of Listeria monocytogenes serotype 4a (strain HCC23).